The chain runs to 263 residues: MATKILALLALLALLVSATNAFIIPQCSLAPSASIPQFLPPVTSMGFEHPAVQAYRLQLALAASALQQPIAQLQQQSLAHLTLQTIATQQQQQQFLPSLSHLAVVNPVTYLQQQLLASNPLALANVAAYQQQQQLQQFMPVLSQLAMVNPAVYLQLLSSSPLAVGNAPTYLQQQLLQQIVPALTQLAVANPAAYLQQLLPFNQLAVSNSAAYLQQRQQLLNPLAVANPLVATFLQQQQQLLPYNQFSLMNPALQQPIVGGAIF.

An N-terminal signal peptide occupies residues 1-21 (MATKILALLALLALLVSATNA).

The protein belongs to the zein family. In terms of tissue distribution, expressed in developing endosperm.

Its function is as follows. Zeins are major seed storage proteins. In Zea mays (Maize), this protein is 22 kDa alpha-zein 16.